The following is a 427-amino-acid chain: Ribose-phosphate pyrophosphokinase 1 (427 aa).

Mg(2+)-binding residues include D128, H130, and D143. S199, S218, S271, and S295 each carry phosphoserine.

The protein belongs to the ribose-phosphate pyrophosphokinase family.

It is found in the cytoplasm. It carries out the reaction D-ribose 5-phosphate + ATP = 5-phospho-alpha-D-ribose 1-diphosphate + AMP + H(+). It participates in metabolic intermediate biosynthesis; 5-phospho-alpha-D-ribose 1-diphosphate biosynthesis; 5-phospho-alpha-D-ribose 1-diphosphate from D-ribose 5-phosphate (route I): step 1/1. In terms of biological role, 5-phosphoribose 1-diphosphate synthase involved in nucleotide, histidine, and tryptophan biosynthesis. Active in heteromultimeric complexes with other 5-phosphoribose 1-diphosphate synthases (PRS2, PRS3, PRS4 and PRS5). The sequence is that of Ribose-phosphate pyrophosphokinase 1 (PRS1) from Saccharomyces cerevisiae (strain ATCC 204508 / S288c) (Baker's yeast).